We begin with the raw amino-acid sequence, 1495 residues long: Pregnancy zone protein (1495 aa).

The first 24 residues, 1-24, serve as a signal peptide directing secretion; sequence MRRNQLPTPAFLLLFLLLPRDATT. A disulfide bond links cysteine 48 and cysteine 86. 2 N-linked (GlcNAc...) asparagine glycosylation sites follow: asparagine 55 and asparagine 157. Cystine bridges form between cysteine 249–cysteine 298 and cysteine 267–cysteine 286. N-linked (GlcNAc...) asparagine glycans are attached at residues asparagine 382, asparagine 405, and asparagine 412. The cysteines at positions 469 and 562 are disulfide-linked. An N-linked (GlcNAc...) asparagine glycan is attached at asparagine 568. 6 disulfide bridges follow: cysteine 594–cysteine 783, cysteine 642–cysteine 689, cysteine 833–cysteine 861, cysteine 859–cysteine 895, cysteine 933–cysteine 1339, and cysteine 1092–cysteine 1140. Residues 686-744 are bait region; that stretch reads PRFCQEFQHYPAMGGVAPQALAVAASGPGSSFRAMGVPMMGLDYSDEINQVVEVRETVR. N-linked (GlcNAc...) asparagine glycans are attached at residues asparagine 881 and asparagine 942. Positions 984-987 form a cross-link, isoglutamyl cysteine thioester (Cys-Gln); the sequence is CGEQ. The N-linked (GlcNAc...) asparagine glycan is linked to asparagine 1003. Residues asparagine 1385 and asparagine 1443 are each glycosylated (N-linked (GlcNAc...) asparagine).

Belongs to the protease inhibitor I39 (alpha-2-macroglobulin) family. Highest expression in liver, medium expression in ovary, heart and stomach. Low expression in lung, kidney and uterus. Protein found in plasma.

It is found in the secreted. In terms of biological role, is able to inhibit all four classes of proteinases by a unique 'trapping' mechanism. This protein has a peptide stretch, called the 'bait region' which contains specific cleavage sites for different proteinases. When a proteinase cleaves the bait region, a conformational change is induced in the protein which traps the proteinase. The entrapped enzyme remains active against low molecular weight substrates (activity against high molecular weight substrates is greatly reduced). Following cleavage in the bait region, a thioester bond is hydrolyzed and mediates the covalent binding of the protein to the proteinase. This chain is Pregnancy zone protein (Pzp), found in Mus musculus (Mouse).